We begin with the raw amino-acid sequence, 493 residues long: Lysine--tRNA ligase (493 aa).

Mg(2+) contacts are provided by Glu-402 and Glu-409.

It belongs to the class-II aminoacyl-tRNA synthetase family. In terms of assembly, homodimer. It depends on Mg(2+) as a cofactor.

Its subcellular location is the cytoplasm. The enzyme catalyses tRNA(Lys) + L-lysine + ATP = L-lysyl-tRNA(Lys) + AMP + diphosphate. This chain is Lysine--tRNA ligase, found in Ureaplasma urealyticum serovar 10 (strain ATCC 33699 / Western).